The sequence spans 117 residues: Holo-[acyl-carrier-protein] synthase (117 aa).

Mg(2+) contacts are provided by aspartate 6 and glutamate 55.

It belongs to the P-Pant transferase superfamily. AcpS family. Mg(2+) serves as cofactor.

It is found in the cytoplasm. It carries out the reaction apo-[ACP] + CoA = holo-[ACP] + adenosine 3',5'-bisphosphate + H(+). In terms of biological role, transfers the 4'-phosphopantetheine moiety from coenzyme A to a Ser of acyl-carrier-protein. This chain is Holo-[acyl-carrier-protein] synthase, found in Chlorobaculum tepidum (strain ATCC 49652 / DSM 12025 / NBRC 103806 / TLS) (Chlorobium tepidum).